Reading from the N-terminus, the 148-residue chain is MSVLSEFKAFAVKGNVVDMAVGIIIGAAFGKIVSSFVGDVIMPPLGLLIGGVDFSDLAITLRPAQGTAPAVLLAYGKFIQTVIDFIIVAFAIFMGVKAINRLKREEAKAPTLPPTPSKQEVLLSEIRDLLKEQNKPAAPVTVDPTRPL.

Transmembrane regions (helical) follow at residues 9 to 29 (AFAVKGNVVDMAVGIIIGAAF) and 79 to 99 (IQTVIDFIIVAFAIFMGVKAI).

Belongs to the MscL family. Homopentamer.

The protein resides in the cell inner membrane. Functionally, channel that opens in response to stretch forces in the membrane lipid bilayer. May participate in the regulation of osmotic pressure changes within the cell. This Pseudomonas savastanoi pv. phaseolicola (strain 1448A / Race 6) (Pseudomonas syringae pv. phaseolicola (strain 1448A / Race 6)) protein is Large-conductance mechanosensitive channel.